We begin with the raw amino-acid sequence, 298 residues long: Lipoyl synthase (298 aa).

[4Fe-4S] cluster-binding residues include cysteine 40, cysteine 45, cysteine 51, cysteine 67, cysteine 71, cysteine 74, and serine 280. Residues alanine 53 to serine 269 enclose the Radical SAM core domain.

This sequence belongs to the radical SAM superfamily. Lipoyl synthase family. It depends on [4Fe-4S] cluster as a cofactor.

Its subcellular location is the cytoplasm. The catalysed reaction is [[Fe-S] cluster scaffold protein carrying a second [4Fe-4S](2+) cluster] + N(6)-octanoyl-L-lysyl-[protein] + 2 oxidized [2Fe-2S]-[ferredoxin] + 2 S-adenosyl-L-methionine + 4 H(+) = [[Fe-S] cluster scaffold protein] + N(6)-[(R)-dihydrolipoyl]-L-lysyl-[protein] + 4 Fe(3+) + 2 hydrogen sulfide + 2 5'-deoxyadenosine + 2 L-methionine + 2 reduced [2Fe-2S]-[ferredoxin]. It participates in protein modification; protein lipoylation via endogenous pathway; protein N(6)-(lipoyl)lysine from octanoyl-[acyl-carrier-protein]. Its function is as follows. Catalyzes the radical-mediated insertion of two sulfur atoms into the C-6 and C-8 positions of the octanoyl moiety bound to the lipoyl domains of lipoate-dependent enzymes, thereby converting the octanoylated domains into lipoylated derivatives. The polypeptide is Lipoyl synthase (Bacillus thuringiensis (strain Al Hakam)).